Reading from the N-terminus, the 643-residue chain is Transducer protein Htr8 (643 aa).

5 consecutive transmembrane segments (helical) span residues 48–68 (VFVLAHIPLLLALGLYEGTES), 79–99 (PGILIAAELGIVGALVGLASI), 115–134 (VLASSVVLVQFSGGFIEAHF), 149–169 (WLPFALGLVYVVFTHGVFGMI), and 184–204 (PWVWGGIHGAFVLLLAGALMA). Positions 273–326 (ERLEATANTYGAAMARAADGDLSVRLDPDVENDAMAAIAASFNEMLDETETTIR) constitute an HAMP domain. In terms of domain architecture, Methyl-accepting transducer spans 345-581 (GVVEIEDASG…EAVSMIAEVS (237 aa)).

It belongs to the methyl-accepting chemotaxis (MCP) protein family. Post-translationally, methylated by CheR.

The protein localises to the cell membrane. Functionally, potentially involved in chemo- or phototactic signal transduction. This chain is Transducer protein Htr8 (htr8), found in Halobacterium salinarum (strain ATCC 29341 / DSM 671 / R1).